The chain runs to 157 residues: Transcriptional repressor NrdR (157 aa).

Polar residues predominate over residues 1 to 11 (MQCPSCQNTDS). Positions 1–21 (MQCPSCQNTDSRVLESRSADT) are disordered. A zinc finger lies at 3-34 (CPSCQNTDSRVLESRSADTGKSVRRRRECLNC). The ATP-cone domain maps to 49 to 139 (ITVIKRSESK…VYRQFNGIND (91 aa)).

This sequence belongs to the NrdR family. Zn(2+) serves as cofactor.

Negatively regulates transcription of bacterial ribonucleotide reductase nrd genes and operons by binding to NrdR-boxes. The polypeptide is Transcriptional repressor NrdR (Prochlorococcus marinus (strain MIT 9211)).